A 124-amino-acid polypeptide reads, in one-letter code: Chemotaxis protein CheY1 (124 aa).

In terms of domain architecture, Response regulatory spans 2–120; sequence KLLVVDDSST…VLKEKLEVVL (119 aa). Mg(2+)-binding residues include Asp-7, Asp-8, Asp-53, and Asn-55. Asp-53 bears the 4-aspartylphosphate mark.

In terms of assembly, interacts (when phosphorylated) with FliM. The cofactor is Mg(2+). In terms of processing, phosphorylated by CheAY. Dephosphorylated (inactivated) by CheZ.

The protein resides in the cytoplasm. Chemotactic response regulator protein that modulates the rotation direction of bacterial flagellar motors. Plays an important role in the colonization and infection of Helicobacter pylori. Upon phosphorylation by CheA, interacts with the flagellar motor protein FliM to cause clockwise flagellar rotation and bacterial reversals, as opposed to straight swimming when CheY1 is not phosphorylated. The polypeptide is Chemotaxis protein CheY1 (cheY1) (Helicobacter pylori (strain J99 / ATCC 700824) (Campylobacter pylori J99)).